A 503-amino-acid polypeptide reads, in one-letter code: WD repeat-containing protein 55 homolog (503 aa).

Residues 1–131 form a disordered region; sequence MHTHNNFKTP…DSAAFDLDDL (131 aa). Composition is skewed to acidic residues over residues 12-23 and 37-56; these read DADELDDLDDDM and VGEDESDSDIDEHDLADMEA. Residues 59 to 76 show a composition bias toward polar residues; it reads PNQNADENESISSDSSFD. Residues 78–96 show a composition bias toward acidic residues; it reads NAEDSSDSDDSMLEEDEAE. WD repeat units lie at residues 157–196, 201–242, 244–282, 285–324, 327–366, and 411–450; these read KLEDFITDVCFHPDRDIIALATIIGDVHLYEYGNEGNKLL, VHSK…KLYE, AHDDAINKLHVLDENLFATGDDAGTVKLWDLRTKNPIFE, EVEDQITQMITNDQKKLLLATSADGYLTTFNIAARKLYVQ, PYEEELNCMGIYRGSSKLVVGTSKGKLYSYNWGYFGYHCD, and QHNMPIESLDINTSGELLASSSHNNDVRFWNVKYFEDFGD. A disordered region spans residues 483–503; the sequence is TKEDEDNADNNDAAAGPSNSA.

The protein belongs to the WD repeat WDR55 family.

This chain is WD repeat-containing protein 55 homolog, found in Drosophila pseudoobscura pseudoobscura (Fruit fly).